The sequence spans 307 residues: Oxygen-dependent coproporphyrinogen-III oxidase (307 aa).

Ser-99 lines the substrate pocket. A divalent metal cation is bound by residues His-103 and His-113. His-113 functions as the Proton donor in the catalytic mechanism. 115–117 (NVR) serves as a coordination point for substrate. Residues His-152 and His-182 each coordinate a divalent metal cation. An important for dimerization region spans residues 247–282 (YVEFNLVFDRGTLFGLQSGGRTESILLSMPPTAGWR). 265-267 (GGR) lines the substrate pocket.

The protein belongs to the aerobic coproporphyrinogen-III oxidase family. As to quaternary structure, homodimer. The cofactor is a divalent metal cation.

It is found in the cytoplasm. The catalysed reaction is coproporphyrinogen III + O2 + 2 H(+) = protoporphyrinogen IX + 2 CO2 + 2 H2O. The protein operates within porphyrin-containing compound metabolism; protoporphyrin-IX biosynthesis; protoporphyrinogen-IX from coproporphyrinogen-III (O2 route): step 1/1. Its function is as follows. Involved in the heme biosynthesis. Catalyzes the aerobic oxidative decarboxylation of propionate groups of rings A and B of coproporphyrinogen-III to yield the vinyl groups in protoporphyrinogen-IX. This chain is Oxygen-dependent coproporphyrinogen-III oxidase, found in Burkholderia mallei (strain SAVP1).